Here is a 430-residue protein sequence, read N- to C-terminus: Neuropeptide FF receptor 1 (430 aa).

Residues 1–20 (MEGEPSQPPNSSWPLSQNGT) are disordered. The Extracellular portion of the chain corresponds to 1 to 43 (MEGEPSQPPNSSWPLSQNGTNTEATPATNLTFSSYYQHTSPVA). The segment covering 9–20 (PNSSWPLSQNGT) has biased composition (polar residues). N-linked (GlcNAc...) asparagine glycans are attached at residues Asn-10, Asn-18, and Asn-29. Residues 44-64 (AMFIVAYALIFLLCMVGNTLV) form a helical membrane-spanning segment. The Cytoplasmic portion of the chain corresponds to 65–80 (CFIVLKNRHMHTVTNM). The helical transmembrane segment at 81 to 101 (FILNLAVSDLLVGIFCMPTTL) threads the bilayer. At 102 to 117 (VDNLITGWPFDNATCK) the chain is on the extracellular side. Residue Asn-113 is glycosylated (N-linked (GlcNAc...) asparagine). A disulfide bridge links Cys-116 with Cys-203. A helical transmembrane segment spans residues 118–138 (MSGLVQGMSVSASVFTLVAIA). Residues 139-158 (VERFRCIVHPFREKLTLRKA) lie on the Cytoplasmic side of the membrane. A helical membrane pass occupies residues 159-179 (LVTIAVIWALALLIMCPSAVT). At 180 to 214 (LTVTREEHHFMVDARNRSYPLYSCWEAWPEKGMRR) the chain is on the extracellular side. A glycan (N-linked (GlcNAc...) asparagine) is linked at Asn-195. The helical transmembrane segment at 215–235 (VYTTVLFSHIYLAPLALIVVM) threads the bilayer. The Cytoplasmic segment spans residues 236 to 271 (YARIARKLCQAPGPAPGGEEAADPRASRRRARVVHM). The helical transmembrane segment at 272 to 292 (LVMVALFFTLSWLPLWALLLL) threads the bilayer. Topologically, residues 293–307 (IDYGQLSAPQLHLVT) are extracellular. A helical membrane pass occupies residues 308 to 328 (VYAFPFAHWLAFFNSSANPII). Topologically, residues 329–430 (YGYFNENFRR…LPLTIPAWDI (102 aa)) are cytoplasmic. Residues 379-404 (SDSGLPSESGPSSGAPRPGRLPLRNG) show a composition bias toward low complexity. Positions 379-413 (SDSGLPSESGPSSGAPRPGRLPLRNGRVAHHGLPR) are disordered.

The protein belongs to the G-protein coupled receptor 1 family.

It is found in the cell membrane. Receptor for NPAF (A-18-F-amide) and NPFF (F-8-F-amide) neuropeptides, also known as morphine-modulating peptides. Can also be activated by a variety of naturally occurring or synthetic FMRF-amide like ligands. This receptor mediates its action by association with G proteins that activate a phosphatidylinositol-calcium second messenger system. This is Neuropeptide FF receptor 1 from Homo sapiens (Human).